The chain runs to 437 residues: UDP-sugar transporter protein SLC35A5 (437 aa).

Over 1–21 the chain is Cytoplasmic; that stretch reads MKVIFLRQLKTRGMERKCSRR. The chain crosses the membrane as a helical span at residues 22-42; sequence PGLGPPTLYTFLLGIIFITLS. At 43 to 65 the chain is on the lumenal side; the sequence is SSRILLVKYSANEENKYDYLPTT. The chain crosses the membrane as a helical span at residues 66–86; sequence VNVCSELMKLILCILVSLCVI. Residues 87-106 lie on the Cytoplasmic side of the membrane; sequence KKEDHQSRHLRCTSWKEFSS. Residues 107–129 traverse the membrane as a helical segment; sequence FMKWSIPAFLYFLDNLIVFYVLS. The Lumenal segment spans residues 130–132; the sequence is YLQ. The chain crosses the membrane as a helical span at residues 133–155; that stretch reads PAMAVIFSNFSIITTALLFRIVL. Topologically, residues 156–158 are cytoplasmic; sequence KRH. Residues 159–179 form a helical membrane-spanning segment; it reads LNWIQWASLLILFLSIVALTA. Over 180–241 the chain is Lumenal; the sequence is STKTSQHELA…TTARVFSHIR (62 aa). An N-linked (GlcNAc...) asparagine glycan is attached at Asn217. A helical membrane pass occupies residues 242–262; the sequence is LGLGHVLIIVQCFISSMANIY. Residues 263–276 are Cytoplasmic-facing; sequence NEKILKEGTQLTES. The helical transmembrane segment at 277–297 threads the bilayer; it reads IFIQNSKLYFFGIVFNGLTLV. The Lumenal portion of the chain corresponds to 298-316; it reads LQSSNRDQIQNCGFFYGHN. A helical membrane pass occupies residues 317–337; sequence AFSVVLIFVTAFQGLSVAFIL. The Cytoplasmic segment spans residues 338–343; that stretch reads KFLDNM. A helical membrane pass occupies residues 344–364; that stretch reads FHVLMAQVTTVIITTVSVLVF. The Lumenal segment spans residues 365–367; sequence DFR. Residues 368 to 388 form a helical membrane-spanning segment; sequence PSLDFFLEAPSVLLSIFIYNA. The Cytoplasmic segment spans residues 389-437; the sequence is SKPQNLECAPKQERIRHLSGSLWERSSGDGEELERLTKLKSDDSDDDTL. A phosphoserine mark is found at Ser407, Ser429, and Ser432. The tract at residues 412–437 is disordered; that stretch reads ERSSGDGEELERLTKLKSDDSDDDTL. A compositionally biased stretch (basic and acidic residues) spans 421-430; the sequence is LERLTKLKSD.

Belongs to the nucleotide-sugar transporter family. SLC35A subfamily. As to quaternary structure, probably forms homooligomers and heterooligomers with SLC35A1, SLC35A2, SLC35A3 and SLC35A4.

It localises to the golgi apparatus membrane. It catalyses the reaction UMP(out) + UDP-alpha-D-glucuronate(in) = UMP(in) + UDP-alpha-D-glucuronate(out). The enzyme catalyses UMP(out) + UDP-N-acetyl-alpha-D-glucosamine(in) = UMP(in) + UDP-N-acetyl-alpha-D-glucosamine(out). The catalysed reaction is UDP-N-acetyl-alpha-D-galactosamine(in) + UMP(out) = UDP-N-acetyl-alpha-D-galactosamine(out) + UMP(in). Probable UDP-sugar:UMP transmembrane antiporter involved in UDP-alpha-D-glucuronate/UDP-GlcA, UDP-GlcNAc/UDP-N-acetyl-alpha-D-glucosamine and UDP-N-acetyl-alpha-D-galactosamine/UDP-GalNAc transport from the cytosol to the lumen of the Golgi. This is UDP-sugar transporter protein SLC35A5 from Mus musculus (Mouse).